Consider the following 537-residue polypeptide: CTP synthase (537 aa).

An amidoligase domain region spans residues 1–267 (MTKYIFVTGG…DQIVLDHFDV (267 aa)). Ser-13 serves as a coordination point for CTP. UTP is bound at residue Ser-13. Position 14-19 (14-19 (SIGKGI)) interacts with ATP. Residue Tyr-54 participates in L-glutamine binding. Residue Asp-71 coordinates ATP. Mg(2+)-binding residues include Asp-71 and Glu-141. CTP contacts are provided by residues 148 to 150 (DIE), 188 to 193 (KTKPTQ), and Lys-224. UTP contacts are provided by residues 188-193 (KTKPTQ) and Lys-224. The Glutamine amidotransferase type-1 domain maps to 292 to 535 (KIALVGKYVA…IDAANQTGKV (244 aa)). Gly-354 contacts L-glutamine. Residue Cys-381 is the Nucleophile; for glutamine hydrolysis of the active site. L-glutamine-binding positions include 382-385 (LGMQ), Glu-405, and Arg-463. Residues His-508 and Glu-510 contribute to the active site.

It belongs to the CTP synthase family. Homotetramer.

The catalysed reaction is UTP + L-glutamine + ATP + H2O = CTP + L-glutamate + ADP + phosphate + 2 H(+). The enzyme catalyses L-glutamine + H2O = L-glutamate + NH4(+). It catalyses the reaction UTP + NH4(+) + ATP = CTP + ADP + phosphate + 2 H(+). It participates in pyrimidine metabolism; CTP biosynthesis via de novo pathway; CTP from UDP: step 2/2. With respect to regulation, allosterically activated by GTP, when glutamine is the substrate; GTP has no effect on the reaction when ammonia is the substrate. The allosteric effector GTP functions by stabilizing the protein conformation that binds the tetrahedral intermediate(s) formed during glutamine hydrolysis. Inhibited by the product CTP, via allosteric rather than competitive inhibition. In terms of biological role, catalyzes the ATP-dependent amination of UTP to CTP with either L-glutamine or ammonia as the source of nitrogen. Regulates intracellular CTP levels through interactions with the four ribonucleotide triphosphates. The polypeptide is CTP synthase (Lactiplantibacillus plantarum (strain ATCC BAA-793 / NCIMB 8826 / WCFS1) (Lactobacillus plantarum)).